A 434-amino-acid chain; its full sequence is Fc receptor-like protein 6 (434 aa).

An N-terminal signal peptide occupies residues 1–19 (MLLWTAVLLFVPCVGKTVW). Ig-like C2-type domains follow at residues 20–95 (LYLQ…QTFT), 111–197 (PPVL…PQLE), and 207–293 (PVLT…KKLS). The Extracellular portion of the chain corresponds to 20 to 307 (LYLQAWPNPV…QVLFTPASNW (288 aa)). Disulfide bonds link C39–C83, C132–C180, and C228–C276. N65 carries N-linked (GlcNAc...) asparagine glycosylation. N273 is a glycosylation site (N-linked (GlcNAc...) asparagine). The helical transmembrane segment at 308-328 (LVPWLPASLLGLMVIAAALLV) threads the bilayer. Over 329-434 (YVRSWRKAGP…PLSDCEEVLC (106 aa)) the chain is Cytoplasmic. The ITIM motif motif lies at 369–374 (VVYSVV). Position 371 is a phosphotyrosine (Y371).

Interacts (tyrosine phosphorylated) with PTPN11. Interacts (tyrosine phosphorylated) with PTPN6, INPP5D, INPPL1 and GRB2. Interacts with class II MHC HLA-DR when the alpha chain is associated with a beta-1, beta-4 or a beta-5 but not a beta-3 chain. Post-translationally, phosphorylated on Tyr residues. Tyrosine phosphorylation induces association with phosphatase PTPN11, PTPN6, INPP5D, INPPL1 and GRB2. As to expression, expressed by cytolytic cells including NK cells, effector and effector-memory CD8(+) T-cells, and a subset of NKT cells (at protein level). Also expressed in gamma delta T cells and in a rare subset of effector CD4(+) T-cells (at protein level). Expressed in spleen, skin, peripheral blood leukocytes, liver, lung, bone marrow, small intestine and placenta. Expression among T-cells is greatly expanded in HIV-1 infected individuals, and includes not only effector and effector-memory CD8(+) T-cells but also populations of CD4(+) T-cells. Expression among CD8(+) T-cells and NK cells is expanded in individuals with chronic lymphocytic leukemia (CLL) but is reduced in PBMCs from patients with acute (AML), chronic myeloid leukemia (CML) and non-Hodgkin's lymphoma. Expression is higher in PBMCs and/or CD3(+) cells of patients with autoimmune diseases, such as rheumatoid arthritis (RA), systemic lupus erythematosus (SLE) and idiopathic thrombocytopenia purpura (ITP). In contrast, expression in CD3(+) cells from patients with lupus anticoagulans (LA) is higher.

It localises to the cell membrane. Functionally, acts as a MHC class II receptor. When stimulated on its own, does not play a role in cytokine production or the release of cytotoxic granules by NK cells and cytotoxic CD8(+) T cells. Does not act as an Fc receptor. The polypeptide is Fc receptor-like protein 6 (FCRL6) (Homo sapiens (Human)).